We begin with the raw amino-acid sequence, 334 residues long: Lipoyl synthase (334 aa).

The disordered stretch occupies residues 1–36 (MSDALIAPNASSSEAPQSPAEHYDPTRKQKSADKTA). Low complexity predominate over residues 7 to 20 (APNASSSEAPQSPA). Basic and acidic residues predominate over residues 21 to 36 (EHYDPTRKQKSADKTA). Residues cysteine 81, cysteine 86, cysteine 92, cysteine 107, cysteine 111, cysteine 114, and serine 321 each coordinate [4Fe-4S] cluster. A Radical SAM core domain is found at 92–310 (CFGKGTATFM…EEEAYKMGFT (219 aa)).

This sequence belongs to the radical SAM superfamily. Lipoyl synthase family. [4Fe-4S] cluster serves as cofactor.

It localises to the cytoplasm. The enzyme catalyses [[Fe-S] cluster scaffold protein carrying a second [4Fe-4S](2+) cluster] + N(6)-octanoyl-L-lysyl-[protein] + 2 oxidized [2Fe-2S]-[ferredoxin] + 2 S-adenosyl-L-methionine + 4 H(+) = [[Fe-S] cluster scaffold protein] + N(6)-[(R)-dihydrolipoyl]-L-lysyl-[protein] + 4 Fe(3+) + 2 hydrogen sulfide + 2 5'-deoxyadenosine + 2 L-methionine + 2 reduced [2Fe-2S]-[ferredoxin]. Its pathway is protein modification; protein lipoylation via endogenous pathway; protein N(6)-(lipoyl)lysine from octanoyl-[acyl-carrier-protein]: step 2/2. Its function is as follows. Catalyzes the radical-mediated insertion of two sulfur atoms into the C-6 and C-8 positions of the octanoyl moiety bound to the lipoyl domains of lipoate-dependent enzymes, thereby converting the octanoylated domains into lipoylated derivatives. This chain is Lipoyl synthase, found in Cupriavidus taiwanensis (strain DSM 17343 / BCRC 17206 / CCUG 44338 / CIP 107171 / LMG 19424 / R1) (Ralstonia taiwanensis (strain LMG 19424)).